The sequence spans 191 residues: Cytochrome c oxidase assembly protein CtaG (191 aa).

The Cytoplasmic portion of the chain corresponds to 1–9 (MSLSPHQKT). Residues 10–30 (AGGLVLVVAVMGAASFAAVPF) traverse the membrane as a helical; Signal-anchor for type II membrane protein segment. At 31-191 (YNWFCRVTGF…LAAESATDVN (161 aa)) the chain is on the periplasmic side.

The protein belongs to the COX11/CtaG family.

Its subcellular location is the cell inner membrane. Functionally, exerts its effect at some terminal stage of cytochrome c oxidase synthesis, probably by being involved in the insertion of the copper B into subunit I. This chain is Cytochrome c oxidase assembly protein CtaG, found in Cereibacter sphaeroides (strain ATCC 17023 / DSM 158 / JCM 6121 / CCUG 31486 / LMG 2827 / NBRC 12203 / NCIMB 8253 / ATH 2.4.1.) (Rhodobacter sphaeroides).